We begin with the raw amino-acid sequence, 1295 residues long: Phosphoribosylformylglycinamidine synthase (1295 aa).

The segment at Trp305–Lys327 is disordered. ATP contacts are provided by residues Gly307–Asp318 and Ala678. Mg(2+) is bound by residues Glu718, Asn722, and Asp884. Ser886 lines the ATP pocket. The 254-residue stretch at Val1042 to Gly1295 folds into the Glutamine amidotransferase type-1 domain. Cys1135 (nucleophile) is an active-site residue. Residues His1260 and Glu1262 contribute to the active site.

The protein in the N-terminal section; belongs to the FGAMS family. As to quaternary structure, monomer.

Its subcellular location is the cytoplasm. The enzyme catalyses N(2)-formyl-N(1)-(5-phospho-beta-D-ribosyl)glycinamide + L-glutamine + ATP + H2O = 2-formamido-N(1)-(5-O-phospho-beta-D-ribosyl)acetamidine + L-glutamate + ADP + phosphate + H(+). The protein operates within purine metabolism; IMP biosynthesis via de novo pathway; 5-amino-1-(5-phospho-D-ribosyl)imidazole from N(2)-formyl-N(1)-(5-phospho-D-ribosyl)glycinamide: step 1/2. Phosphoribosylformylglycinamidine synthase involved in the purines biosynthetic pathway. Catalyzes the ATP-dependent conversion of formylglycinamide ribonucleotide (FGAR) and glutamine to yield formylglycinamidine ribonucleotide (FGAM) and glutamate. The polypeptide is Phosphoribosylformylglycinamidine synthase (Escherichia coli (strain UTI89 / UPEC)).